We begin with the raw amino-acid sequence, 459 residues long: Argininosuccinate lyase (459 aa).

This sequence belongs to the lyase 1 family. Argininosuccinate lyase subfamily.

Its subcellular location is the cytoplasm. The catalysed reaction is 2-(N(omega)-L-arginino)succinate = fumarate + L-arginine. Its pathway is amino-acid biosynthesis; L-arginine biosynthesis; L-arginine from L-ornithine and carbamoyl phosphate: step 3/3. The polypeptide is Argininosuccinate lyase (Prochlorococcus marinus (strain MIT 9215)).